A 110-amino-acid polypeptide reads, in one-letter code: UPF0122 protein SAR1212 (110 aa).

Belongs to the UPF0122 family.

Its function is as follows. Might take part in the signal recognition particle (SRP) pathway. This is inferred from the conservation of its genetic proximity to ftsY/ffh. May be a regulatory protein. This chain is UPF0122 protein SAR1212, found in Staphylococcus aureus (strain MRSA252).